We begin with the raw amino-acid sequence, 236 residues long: Truncated formate dehydrogenase 2 (236 aa).

Residues 36–37 (RI), Asp-57, 104–108 (PLHKD), Thr-130, Asp-156, and 185–188 (HISG) contribute to the NAD(+) site.

It belongs to the D-isomer specific 2-hydroxyacid dehydrogenase family. FDH subfamily.

This chain is Truncated formate dehydrogenase 2, found in Saccharomyces cerevisiae (strain ATCC 204508 / S288c) (Baker's yeast).